Reading from the N-terminus, the 589-residue chain is WD repeat-containing protein 26 homolog (589 aa).

Positions M1–I57 are disordered. A compositionally biased stretch (low complexity) spans S25–S39. The LisH domain occupies R64 to L96. The 58-residue stretch at H97–D154 folds into the CTLH domain. WD repeat units follow at residues S272–L311, G317–E358, G360–W398, Q401–I440, E442–S480, G484–E526, and G529–Q569.

As to quaternary structure, interacts with RANBPM. In terms of tissue distribution, expressed in roots, leaves and flowers.

The protein resides in the cytoplasm. Acts as a component involved in the crosstalk regulation between light, hormone and abiotic stress response. The polypeptide is WD repeat-containing protein 26 homolog (Arabidopsis thaliana (Mouse-ear cress)).